The primary structure comprises 622 residues: ABC transporter permease protein YxdM (622 aa).

The next 10 helical transmembrane spans lie at 20 to 40, 56 to 76, 118 to 138, 154 to 174, 195 to 215, 219 to 239, 279 to 299, 498 to 518, 558 to 578, and 590 to 610; these read AFFL…MFLF, GLTA…LYSV, AGII…AYIL, ITAC…ILFV, PSVL…GMVL, VHGA…YFFF, LFFI…VLAM, TVQL…VFFV, IQLA…TLFA, and VAGP…LFFL.

The protein belongs to the ABC-4 integral membrane protein family. As to quaternary structure, the complex is composed of two ATP-binding proteins (YxdL) and two transmembrane proteins (YxdM).

The protein resides in the cell membrane. In terms of biological role, part of the ABC transporter complex YxdLM which could be involved in peptide resistance. The sequence is that of ABC transporter permease protein YxdM (yxdM) from Bacillus subtilis (strain 168).